The following is a 349-amino-acid chain: MDMENLTWLHGKPTASGILKANPEDFVVVEDLGFEPDGEGEHLLVRIRKNGCNTQFVADYLARFAKLHPRLVSYAGLKDRHAVTEQWFCLHLPGKEAPDLATFELEGCEVLEAVRHKRKLRIGSLKGNAFTLVLRHITDRQDVEQRLQQIAAQGVPNYFGSQRFGRGGNNLVQARLWANNEIRVKERSKRSFYLSASRSAMFNLISSHRLAQQLSTTVLEGDALQLSGRGSWFVAQADELATLQQRVTAGELNITAPLPGDSELGTHGEALAFEQACLAEQTELLSLIKRERVEGSRRAVLLKPQNMISNWWDDVTLELSFWLPAGSFATSVVREIMNQDRADDTDIIE.

F26 is a substrate binding site. The Nucleophile role is filled by D79. Residue N128 coordinates substrate. One can recognise a TRUD domain in the interval 154–302 (GVPNYFGSQR…VEGSRRAVLL (149 aa)). F328 contacts substrate.

It belongs to the pseudouridine synthase TruD family.

It catalyses the reaction uridine(13) in tRNA = pseudouridine(13) in tRNA. In terms of biological role, responsible for synthesis of pseudouridine from uracil-13 in transfer RNAs. In Yersinia pseudotuberculosis serotype O:1b (strain IP 31758), this protein is tRNA pseudouridine synthase D.